A 1221-amino-acid polypeptide reads, in one-letter code: Deubiquitinating protein VCPIP1 (1221 aa).

A compositionally biased stretch (pro residues) spans 1–19 (MSQPPPPPPLPPPPPPPEA). Residues 1–40 (MSQPPPPPPLPPPPPPPEAPQTSSSLAAAATPGGLSKRRD) form a disordered region. An OTU domain is found at 207 to 360 (LIPVHVDGDG…RNHYIPLVGI (154 aa)). The active site involves Asp215. The Nucleophile role is filled by Cys218. Residue His353 is part of the active site. At Lys407 the chain carries N6-acetyllysine. Disordered stretches follow at residues 724-778 (SVMQ…KIRI) and 988-1009 (EATTRSRESSPSHGLLKLGSGG). 2 positions are modified to phosphoserine: Ser746 and Ser756. The span at 754-770 (PSSAPATPTKAPYSPTT) shows a compositional bias: low complexity. Phosphothreonine is present on Thr762. Ser767, Ser993, Ser997, and Ser1076 each carry phosphoserine. Disordered regions lie at residues 1117 to 1177 (ASMD…TDSR) and 1189 to 1221 (RSKAQKENSMEEPEEMDSQDAETTNTTEPMDHS). The segment covering 1143 to 1156 (VSSSVRPGNLQTGL) has biased composition (polar residues). The span at 1162-1173 (LTGGTENLNTET) shows a compositional bias: low complexity. Phosphoserine is present on residues Ser1197 and Ser1206. A compositionally biased stretch (acidic residues) spans 1198–1208 (MEEPEEMDSQD). Residues 1209 to 1221 (AETTNTTEPMDHS) are compositionally biased toward polar residues.

In terms of assembly, binds VCP and the ternary complex containing STX5A, NSFL1C and VCP. Post-translationally, phosphorylated at Ser-1206 by ATM or ATR following induction of covalent DNA-protein cross-links (DPCs). Widely expressed.

It is found in the nucleus. It localises to the cytoplasm. Its subcellular location is the endoplasmic reticulum. The protein resides in the golgi apparatus. The protein localises to the golgi stack. The catalysed reaction is Thiol-dependent hydrolysis of ester, thioester, amide, peptide and isopeptide bonds formed by the C-terminal Gly of ubiquitin (a 76-residue protein attached to proteins as an intracellular targeting signal).. Deubiquitinating enzyme involved in DNA repair and reassembly of the Golgi apparatus and the endoplasmic reticulum following mitosis. Necessary for VCP-mediated reassembly of Golgi stacks after mitosis. Plays a role in VCP-mediated formation of transitional endoplasmic reticulum (tER). Mediates dissociation of the ternary complex containing STX5A, NSFL1C and VCP. Also involved in DNA repair following phosphorylation by ATM or ATR: acts by catalyzing deubiquitination of SPRTN, thereby promoting SPRTN recruitment to chromatin and subsequent proteolytic cleavage of covalent DNA-protein cross-links (DPCs). Hydrolyzes 'Lys-11'- and 'Lys-48'-linked polyubiquitin chains. The chain is Deubiquitinating protein VCPIP1 from Rattus norvegicus (Rat).